The chain runs to 370 residues: Histidinol-phosphate aminotransferase 3 (370 aa).

The residue at position 233 (Lys-233) is an N6-(pyridoxal phosphate)lysine.

This sequence belongs to the class-II pyridoxal-phosphate-dependent aminotransferase family. Histidinol-phosphate aminotransferase subfamily. In terms of assembly, homodimer. Pyridoxal 5'-phosphate is required as a cofactor.

It catalyses the reaction L-histidinol phosphate + 2-oxoglutarate = 3-(imidazol-4-yl)-2-oxopropyl phosphate + L-glutamate. It functions in the pathway amino-acid biosynthesis; L-histidine biosynthesis; L-histidine from 5-phospho-alpha-D-ribose 1-diphosphate: step 7/9. This Burkholderia lata (strain ATCC 17760 / DSM 23089 / LMG 22485 / NCIMB 9086 / R18194 / 383) protein is Histidinol-phosphate aminotransferase 3.